Consider the following 276-residue polypeptide: Vitamin B12-binding protein (276 aa).

A signal peptide spans 1–20 (MIVRFLCWLTGLLLCTAAYA). The Fe/B12 periplasmic-binding domain occupies 24–273 (RVISLAPHAT…QLTALSPGSS (250 aa)). A disulfide bond links Cys186 and Cys262.

The protein belongs to the BtuF family. As to quaternary structure, the complex is composed of two ATP-binding proteins (BtuD), two transmembrane proteins (BtuC) and a solute-binding protein (BtuF).

The protein localises to the periplasm. Functionally, part of the ABC transporter complex BtuCDF involved in vitamin B12 import. Binds vitamin B12 and delivers it to the periplasmic surface of BtuC. In Pectobacterium carotovorum subsp. carotovorum (strain PC1), this protein is Vitamin B12-binding protein.